The sequence spans 583 residues: Protein FMP25, mitochondrial (583 aa).

A mitochondrion-targeting transit peptide spans 1 to 25 (MSFRLFTRTSQRLPRLNWVSPIRRY). A helical membrane pass occupies residues 83-105 (AVGQGILILVVVGGLGTAYLRWP). RCC1 repeat units lie at residues 332-389 (KGQF…AIDK), 390-452 (TGEI…VTIR), 459-510 (DHHY…TETE), and 512-569 (ENEV…KEQR).

It localises to the mitochondrion membrane. The chain is Protein FMP25, mitochondrial (FMP25) from Saccharomyces cerevisiae (strain ATCC 204508 / S288c) (Baker's yeast).